A 388-amino-acid chain; its full sequence is Mannitol-1-phosphate 5-dehydrogenase (388 aa).

4-15 (AVHFGAGNIGRG) lines the NAD(+) pocket.

It belongs to the mannitol dehydrogenase family.

The enzyme catalyses D-mannitol 1-phosphate + NAD(+) = beta-D-fructose 6-phosphate + NADH + H(+). The protein is Mannitol-1-phosphate 5-dehydrogenase of Lactococcus lactis subsp. cremoris (strain MG1363).